The sequence spans 387 residues: Exodeoxyribonuclease 7 large subunit (387 aa).

This sequence belongs to the XseA family. In terms of assembly, heterooligomer composed of large and small subunits.

The protein resides in the cytoplasm. The enzyme catalyses Exonucleolytic cleavage in either 5'- to 3'- or 3'- to 5'-direction to yield nucleoside 5'-phosphates.. In terms of biological role, bidirectionally degrades single-stranded DNA into large acid-insoluble oligonucleotides, which are then degraded further into small acid-soluble oligonucleotides. The chain is Exodeoxyribonuclease 7 large subunit from Campylobacter jejuni subsp. jejuni serotype O:6 (strain 81116 / NCTC 11828).